The chain runs to 736 residues: Phosphoribosylformylglycinamidine synthase subunit PurL (736 aa).

The active site involves His49. ATP contacts are provided by Tyr52 and Lys91. A Mg(2+)-binding site is contributed by Glu93. Substrate is bound by residues 94–97 (SHNH) and Arg116. His95 (proton acceptor) is an active-site residue. Asp117 contacts Mg(2+). Gln240 is a substrate binding site. Asp268 is a binding site for Mg(2+). 312–314 (ESQ) lines the substrate pocket. ATP contacts are provided by Asp493 and Gly530. Residue Asn531 participates in Mg(2+) binding. Position 533 (Ser533) interacts with substrate.

This sequence belongs to the FGAMS family. Monomer. Part of the FGAM synthase complex composed of 1 PurL, 1 PurQ and 2 PurS subunits.

The protein localises to the cytoplasm. The catalysed reaction is N(2)-formyl-N(1)-(5-phospho-beta-D-ribosyl)glycinamide + L-glutamine + ATP + H2O = 2-formamido-N(1)-(5-O-phospho-beta-D-ribosyl)acetamidine + L-glutamate + ADP + phosphate + H(+). It functions in the pathway purine metabolism; IMP biosynthesis via de novo pathway; 5-amino-1-(5-phospho-D-ribosyl)imidazole from N(2)-formyl-N(1)-(5-phospho-D-ribosyl)glycinamide: step 1/2. Part of the phosphoribosylformylglycinamidine synthase complex involved in the purines biosynthetic pathway. Catalyzes the ATP-dependent conversion of formylglycinamide ribonucleotide (FGAR) and glutamine to yield formylglycinamidine ribonucleotide (FGAM) and glutamate. The FGAM synthase complex is composed of three subunits. PurQ produces an ammonia molecule by converting glutamine to glutamate. PurL transfers the ammonia molecule to FGAR to form FGAM in an ATP-dependent manner. PurS interacts with PurQ and PurL and is thought to assist in the transfer of the ammonia molecule from PurQ to PurL. This Rhodopseudomonas palustris (strain ATCC BAA-98 / CGA009) protein is Phosphoribosylformylglycinamidine synthase subunit PurL.